Here is a 352-residue protein sequence, read N- to C-terminus: Zinc finger protein 185 (352 aa).

Disordered stretches follow at residues 1–73 (MTTE…ELQS) and 86–121 (DVLPEKNQEPPALARPDSGLSSSTTEKIAHRQITPP). Position 18 is a phosphoserine (S18). Residues 61-72 (KKTTSSPTQELQ) are compositionally biased toward polar residues. T137 bears the Phosphothreonine mark. Over residues 251–268 (VSSGKPVSSHCDSPSSIE) the composition is skewed to polar residues. A disordered region spans residues 251-287 (VSSGKPVSSHCDSPSSIEDSLDLAKKPPHEGTPSERP). Over residues 272–287 (DLAKKPPHEGTPSERP) the composition is skewed to basic and acidic residues. Positions 292–347 (CTYCSHEIQDCPKITLEHLGICCHEYCFKCGICNKPMGDLLDQIFIHRDTIHCGKC) constitute an LIM zinc-binding domain.

Expressed in skin, kidney, ovary, testis. Also expressed in brain, cartilage, heart, lung, spleen and thymus.

It is found in the cytoplasm. The protein localises to the cytoskeleton. The protein resides in the cell junction. Its subcellular location is the focal adhesion. In terms of biological role, may be involved in the regulation of cellular proliferation and/or differentiation. The protein is Zinc finger protein 185 (Znf185) of Mus musculus (Mouse).